Here is a 391-residue protein sequence, read N- to C-terminus: 3-ketoacyl-CoA thiolase (391 aa).

Cys-95 serves as the catalytic Acyl-thioester intermediate. Catalysis depends on proton acceptor residues His-347 and Cys-377.

It belongs to the thiolase-like superfamily. Thiolase family. In terms of assembly, heterotetramer of two alpha chains (FadB) and two beta chains (FadA).

Its subcellular location is the cytoplasm. The enzyme catalyses an acyl-CoA + acetyl-CoA = a 3-oxoacyl-CoA + CoA. The protein operates within lipid metabolism; fatty acid beta-oxidation. Catalyzes the final step of fatty acid oxidation in which acetyl-CoA is released and the CoA ester of a fatty acid two carbons shorter is formed. The protein is 3-ketoacyl-CoA thiolase of Pseudomonas putida (strain ATCC 47054 / DSM 6125 / CFBP 8728 / NCIMB 11950 / KT2440).